A 572-amino-acid chain; its full sequence is M-phase inducer phosphatase 3 (572 aa).

Disordered stretches follow at residues 95 to 117 and 304 to 354; these read NLGDETAPLPTESPDRMSSGKLE and SPSM…QRRG. Positions 420 to 527 constitute a Rhodanese domain; sequence LVEKFFIIDC…FFPEYKELCE (108 aa). The active site involves cysteine 476.

Belongs to the MPI phosphatase family.

It catalyses the reaction O-phospho-L-tyrosyl-[protein] + H2O = L-tyrosyl-[protein] + phosphate. This protein functions as a dosage-dependent inducer in mitotic control. It is a tyrosine protein phosphatase required for progression of the cell cycle. It may directly dephosphorylate p34(cdc2) and activate the p34(cdc2) kinase activity. The polypeptide is M-phase inducer phosphatase 3 (cdc25-3) (Xenopus laevis (African clawed frog)).